The primary structure comprises 78 residues: Large ribosomal subunit protein bL28 (78 aa).

The protein belongs to the bacterial ribosomal protein bL28 family.

The protein is Large ribosomal subunit protein bL28 of Prochlorococcus marinus (strain AS9601).